We begin with the raw amino-acid sequence, 462 residues long: Cleavage and polyadenylation specificity factor subunit 7 (462 aa).

Disordered stretches follow at residues 34-68 (VLTA…NKTP) and 161-213 (TRQN…PSVL). Pro residues predominate over residues 50 to 62 (EPPPPVRQEPAPK). The RRM domain occupies 82–162 (AAVYVGSFSW…EKVDVRPATR (81 aa)). Over residues 181–190 (HSRDSSDSAD) the composition is skewed to basic and acidic residues. Position 194 is a phosphothreonine (threonine 194). Position 196 is a phosphoserine (serine 196). Lysine 345 is covalently cross-linked (Glycyl lysine isopeptide (Lys-Gly) (interchain with G-Cter in SUMO2)). The disordered stretch occupies residues 400–462 (SVGASGSSSR…HRDRERDRHH (63 aa)). A phosphoserine mark is found at serine 404 and serine 414. Residues 409–460 (RKRHRSRERSPSRSRESSRRHRDLLHNEDRHDDYFQERNREHERHRDRERDR) are arg/Ser-rich domain. 2 stretches are compositionally biased toward basic and acidic residues: residues 416-425 (ERSPSRSRES) and 432-462 (LLHN…DRHH).

This sequence belongs to the RRM CPSF6/7 family. In terms of assembly, component of the cleavage factor Im (CFIm) complex which is a heterotetramer composed of two subunits of NUDT21/CPSF5 and two subunits of CPSF6 or CPSF7 or a heterodimer of CPSF6 and CPSF7. The cleavage factor Im (CFIm) complex associates with the CPSF and CSTF complexes to promote the assembly of the core mRNA 3'-processing machinery. Interacts with NUDT21/CPSF5. Interacts (via Arg/Ser-rich domain) with FIP1L1 (preferentially via unphosphorylated form and Arg/Glu/Asp-rich region); this interaction mediates, at least in part, the interaction between the CFIm and CPSF complexes and may be inhibited by CPSF7 hyper-phosphorylation. In terms of processing, phosphorylated. Post-translationally, asymmetrically dimethylated on arginine residues by PRMT1.

The protein resides in the nucleus. Its subcellular location is the cytoplasm. Its function is as follows. Component of the cleavage factor Im (CFIm) complex that functions as an activator of the pre-mRNA 3'-end cleavage and polyadenylation processing required for the maturation of pre-mRNA into functional mRNAs. CFIm contributes to the recruitment of multiprotein complexes on specific sequences on the pre-mRNA 3'-end, so called cleavage and polyadenylation signals (pA signals). Most pre-mRNAs contain multiple pA signals, resulting in alternative cleavage and polyadenylation (APA) producing mRNAs with variable 3'-end formation. The CFIm complex acts as a key regulator of cleavage and polyadenylation site choice during APA through its binding to 5'-UGUA-3' elements localized in the 3'-untranslated region (UTR) for a huge number of pre-mRNAs. CPSF7 activates directly the mRNA 3'-processing machinery. Binds to pA signals in RNA substrates. The sequence is that of Cleavage and polyadenylation specificity factor subunit 7 from Rattus norvegicus (Rat).